Reading from the N-terminus, the 528-residue chain is Glucosidase 2 subunit beta (528 aa).

A signal peptide spans 1-14; the sequence is MLLPLLLLLPMCWA. S24 bears the Phosphoserine; by FAM20C mark. LDL-receptor class A domains lie at 37–71 and 72–113; these read FTCL…AACP and NGSF…VICE. Cystine bridges form between C39-C58 and C56-C70. Substrate is bound at residue D49. 6 residues coordinate Ca(2+): Q50, D53, Y55, D57, D63, and E64. Residue D53 participates in substrate binding. N72 is a glycosylation site (N-linked (GlcNAc...) asparagine). Cystine bridges form between C77/C99, C97/C112, and C100/C116. Residue S89 is modified to Phosphoserine; by PKC. Positions 91, 94, 96, 98, 104, and 105 each coordinate Ca(2+). K166 carries the N6-succinyllysine modification. Position 168 is a phosphoserine; by FAM20C (S168). 2 EF-hand domains span residues 209-244 and 245-290; these read QEQE…DTDG and DGAL…TDLP. 5 residues coordinate Ca(2+): D222, D224, D226, T228, and E233. 2 disordered regions span residues 234-266 and 281-357; these read LQTH…TDAT and RSEA…DKMP. A compositionally biased stretch (low complexity) spans 247–258; the sequence is ALSEAEAQALLS. The segment covering 312–337 has biased composition (acidic residues); sequence TEEEEEEEEEEEEEAEEEEEEEDSEE. Over residues 338-348 the composition is skewed to pro residues; that stretch reads APPPLSPPQPA. S383 and S390 each carry phosphoserine; by PKC. In terms of domain architecture, MRH spans 413-514; that stretch reads SQCYELTTNE…ELMTPAACPE (102 aa). C415 and C428 are joined by a disulfide. S434 carries the phosphoserine; by PKC modification. 2 cysteine pairs are disulfide-bonded: C471–C500 and C485–C512. N-linked (GlcNAc...) asparagine glycosylation is present at N476. Residues 525–528 carry the Prevents secretion from ER motif; the sequence is HDEL.

In terms of assembly, heterodimer of a catalytic alpha subunit (GANAB) and a beta subunit (PRKCSH). Binds glycosylated PTPRC.

The protein resides in the endoplasmic reticulum. It participates in glycan metabolism; N-glycan metabolism. Functionally, regulatory subunit of glucosidase II that cleaves sequentially the 2 innermost alpha-1,3-linked glucose residues from the Glc(2)Man(9)GlcNAc(2) oligosaccharide precursor of immature glycoproteins. Required for efficient PKD1/Polycystin-1 biogenesis and trafficking to the plasma membrane of the primary cilia. This chain is Glucosidase 2 subunit beta, found in Homo sapiens (Human).